A 155-amino-acid chain; its full sequence is Probable calcium-binding protein CML9 (155 aa).

EF-hand domains are found at residues 8–43 (EQVDECREIFDLFDSDEDGRIAAGELVTALRSLGQN), 86–121 (ATEKELAACLDVFDDARSGVIPAEQLRQAMVSHGDR), and 122–155 (LTEEEADEMVRKADPAGEGRVEYKEFVKVLMNNK). Ca(2+) is bound by residues Asp-21, Asp-23, Asp-25, Arg-27, and Glu-32.

In terms of biological role, potential calcium sensor. The sequence is that of Probable calcium-binding protein CML9 (CML9) from Oryza sativa subsp. japonica (Rice).